The primary structure comprises 121 residues: Chromosome transmission fidelity protein 8 homolog (121 aa).

It belongs to the CTF8 family. Component of the CTF18-RFC complex, which consists of CTF18, CTF8, DSCC1, RFC2, RFC3, RFC4 and RFC5. The CTF18-RFC complex does not interact with the Rad9/Rad1/Hus1 complex. The CTF18-RFC complex interacts with POLH. CTF18/CTF8/DSCC1 associate with PCNA. CTF8 exists as a dimer with DSCC1.

The protein resides in the nucleus. Its function is as follows. Chromosome cohesion factor involved in sister chromatid cohesion and fidelity of chromosome transmission. Component of one of the cell nuclear antigen loader complexes, CTF18-replication factor C (CTF18-RFC), which consists of CTF18, CTF8, DSCC1, RFC2, RFC3, RFC4 and RFC5. The CTF18-RFC complex binds to single-stranded and primed DNAs and has weak ATPase activity that is stimulated the presence of primed DNA, replication protein A (RPA) and proliferating cell nuclear antigen (PCNA). The CTF18-RFC complex catalyzes the ATP-dependent loading of PCNA onto primed and gapped DNA. It also interacts with and stimulates POLH, which is suggestive of a protein network that coordinates DNA repair, recombination and chromosome cohesion reactions with replication fork progression. This is Chromosome transmission fidelity protein 8 homolog from Rattus norvegicus (Rat).